We begin with the raw amino-acid sequence, 116 residues long: Ribonuclease P protein component 2 (116 aa).

This sequence belongs to the eukaryotic/archaeal RNase P protein component 2 family. As to quaternary structure, consists of a catalytic RNA component and at least 4-5 protein subunits.

Its subcellular location is the cytoplasm. It carries out the reaction Endonucleolytic cleavage of RNA, removing 5'-extranucleotides from tRNA precursor.. In terms of biological role, part of ribonuclease P, a protein complex that generates mature tRNA molecules by cleaving their 5'-ends. The protein is Ribonuclease P protein component 2 of Methanosarcina mazei (strain ATCC BAA-159 / DSM 3647 / Goe1 / Go1 / JCM 11833 / OCM 88) (Methanosarcina frisia).